The following is a 404-amino-acid chain: Growth/differentiation factor 6-A (404 aa).

The first 24 residues, 1–24, serve as a signal peptide directing secretion; sequence MDALRAVAFYALFVFLWSLPCCQS. Positions 25–284 are excised as a propeptide; the sequence is AALISQKRSK…LQFKARRRRR (260 aa). N-linked (GlcNAc...) asparagine glycosylation is present at Asn-91. Positions 263 to 304 are disordered; it reads KSRGDDDEEESALQFKARRRRRTALNNRHGKRHGKKSKSRCS. The segment covering 278–304 has biased composition (basic residues); the sequence is KARRRRRTALNNRHGKRHGKKSKSRCS. Cystine bridges form between Cys-303–Cys-369, Cys-332–Cys-401, and Cys-336–Cys-403.

It belongs to the TGF-beta family. Homodimer; disulfide-linked. First expressed in late gastrula stage embryos (9.5 hours post fertilization (hpf)) in anterior neuroectoderm corresponding to the future dorsal part of the brain. Shortly after tailbud formation (11 hpf), expression expands to the entire neural region and is subsequently expressed in derivatives of the lateral neural plate and migrating neural crest cells, with the future midbrain and hindbrain showing strong expression. Also expressed weakly and transiently in the posterior embryo from 11.5 hpf to 15 hpf in the lateral mesoderm, and in ectoderm above the neural keel. At 14 hpf, expressed along the entire length of the embryo and starting around the 16-somite stage, expressed in the dorsal quadrant of the retina, representing the distal tip of the eye anlage. At this stage, also expressed in the hatching gland and the hypochord. At 24 hpf, expressed in the roof plate outlining the fourth brain ventricle, in the posterior hypochord, the primitive gut endoderm, the ventral tail mesenchyme, the dorsal part of the neural tube and the dorsal fin. Weakly expressed in the dorsal part of the posterior spinal cord and in blood cell precursors.

Its subcellular location is the secreted. In terms of biological role, growth factor that controls proliferation and cellular differentiation in the retina. Plays a key role in regulating apoptosis during retinal development. Establishes dorsal-ventral positional information in the retina and controls the formation of the retinotectal map. Functions maternally in dorsal/ventral patterning to induce the expression of the zygotic bmp2b and bmp4 genes and ventralize embryos. Zygotic expression does not appear to regulate axis specification, but instead functions to establish the integrity of the axial vessels during embryonic development. May be involved in maintaining the identity of cells of the dorsal-most neural tube and of at least a subset of neural crest cells. The protein is Growth/differentiation factor 6-A (gdf6a) of Danio rerio (Zebrafish).